A 989-amino-acid chain; its full sequence is Cation-chloride cotransporter 1 (989 aa).

Positions 1–10 (MENGEIEGAA) are enriched in acidic residues. Residues 1–29 (MENGEIEGAADDGVPVPAPPNGRRYRPVG) form a disordered region. Topologically, residues 1 to 132 (MENGEIEGAA…GRPKETGPKF (132 aa)) are cytoplasmic. Residues 133 to 153 (GTMMGVFVPCLQNILGIIYYI) form a helical membrane-spanning segment. Over 154 to 167 (RFTWIVGMAGVWQS) the chain is Extracellular. Residues 168–188 (LVLVSFCGACTFLTGISLSAI) form a helical membrane-spanning segment. Residues 189-214 (ATNGAMKGGGPYYLIGRALGPEVGVS) are Cytoplasmic-facing. The chain crosses the membrane as a helical span at residues 215 to 235 (IGLCFFLGNAVAGSMYVLGAV). The Extracellular portion of the chain corresponds to 236–280 (ETFLDAVPSAGFFKESVTVVNNTLVNGTATASTATISTPSLHDLQ). Asparagine 256 and asparagine 261 each carry an N-linked (GlcNAc...) asparagine glycan. A helical transmembrane segment spans residues 281 to 301 (VYGVIVTILLCFIVFGGVKII). Residues 302 to 304 (NKV) are Cytoplasmic-facing. Residues 305-325 (APAFLIPVLFSLLCIYLGVFI) form a helical membrane-spanning segment. Topologically, residues 326 to 365 (APRHNAPKGITGLSITTFKDNWGSEYQRTNNAGVPDPNGS) are extracellular. N-linked (GlcNAc...) asparagine glycosylation occurs at asparagine 363. The helical transmembrane segment at 366 to 386 (IYWDFNALVGLFFPAVTGIMA) threads the bilayer. Residues 387 to 405 (GSNRSASLKDTQRSIPIGT) are Cytoplasmic-facing. Residues 406 to 426 (LSATLTTTAMYLFSVLLFGAL) traverse the membrane as a helical segment. At 427–441 (ATREELLTDRLLTAT) the chain is on the extracellular side. The chain crosses the membrane as a helical span at residues 442–462 (VAWPAPAVIYIGIILSTLGAA). At 463–498 (LQSLTGAPRLLAAIANDDILPVLNYFKVSEGAEPHS) the chain is on the cytoplasmic side. A helical membrane pass occupies residues 499–519 (ATLFTAFICICCVVIGNLDLI). Residues 520–522 (TPT) lie on the Extracellular side of the membrane. Residues 523 to 543 (ITMFFLLCYAGVNLSCFLLDL) traverse the membrane as a helical segment. The Cytoplasmic portion of the chain corresponds to 544–551 (LDAPSWRP). A helical transmembrane segment spans residues 552–572 (RWKFHHWSLSLVGALLCVVIM). Residues 573-578 (FLISWS) are Extracellular-facing. A helical transmembrane segment spans residues 579–599 (FTVVSLALASLIYYYVSLKGK). The Cytoplasmic portion of the chain corresponds to 600-989 (AGDWGDGFKS…YRRDVVTFFT (390 aa)).

It belongs to the SLC12A transporter family. As to expression, expressed in roots, stems and leaves with higher expression in root and leaf tips.

The protein localises to the membrane. Probable cation/chloride cotransporter that may mediate potassium-chloride cotransport. Involved in plant development and K(+) and Cl(-) homeostasis. May not be involved in sodium-chloride cotransport. This chain is Cation-chloride cotransporter 1 (CCC1), found in Oryza sativa subsp. japonica (Rice).